A 115-amino-acid polypeptide reads, in one-letter code: NADH-ubiquinone oxidoreductase chain 3 (115 aa).

Transmembrane regions (helical) follow at residues 3-23 (LYTVIFINILLSLTLILVAFW), 55-75 (FFLVAITFLLFDLEIALLLPL), and 86-106 (TMMIMAFILVTILSLGLAYEW).

This sequence belongs to the complex I subunit 3 family. In terms of assembly, core subunit of respiratory chain NADH dehydrogenase (Complex I) which is composed of 45 different subunits. Interacts with TMEM186. Interacts with TMEM242.

The protein resides in the mitochondrion inner membrane. It catalyses the reaction a ubiquinone + NADH + 5 H(+)(in) = a ubiquinol + NAD(+) + 4 H(+)(out). Functionally, core subunit of the mitochondrial membrane respiratory chain NADH dehydrogenase (Complex I) which catalyzes electron transfer from NADH through the respiratory chain, using ubiquinone as an electron acceptor. Essential for the catalytic activity of complex I. In Mus musculus (Mouse), this protein is NADH-ubiquinone oxidoreductase chain 3.